A 677-amino-acid polypeptide reads, in one-letter code: Probable sulfate transporter 4.2 (677 aa).

Residues 1–83 (MSLAVKDLST…RTYRWHQYFK (83 aa)) lie on the Cytoplasmic side of the membrane. A helical transmembrane segment spans residues 84–104 (LDLMAGITVGIMLVPQAMSYA). Topologically, residues 105-108 (RLAG) are extracellular. A helical membrane pass occupies residues 109-129 (LQPIYGLYSSFVPVFVYAVFG). The Cytoplasmic segment spans residues 130–133 (SSRQ). A helical transmembrane segment spans residues 134-154 (LAVGPVALVSLLVSNALSGIV). Over 155 to 161 (DPSEELY) the chain is Extracellular. The helical transmembrane segment at 162–182 (TELAILLALMVGIFESIMGFL) threads the bilayer. The Cytoplasmic segment spans residues 183–189 (RLGWLIR). Residues 190-210 (FISHSVISGFTTASAVVIGLS) form a helical membrane-spanning segment. The Extracellular portion of the chain corresponds to 211–241 (QLKYFLGYSVSRSSKIMPVIDSIIAGADQFK). A helical membrane pass occupies residues 242–262 (WPPFLLGCTILVILLVMKHVG). The Cytoplasmic segment spans residues 263–269 (KAKKELR). A helical transmembrane segment spans residues 270–290 (FIRAAGPLTGLALGTIIAKVF). Residues 291–318 (HPPSITLVGDIPQGLPKFSFPKSFDHAK) lie on the Extracellular side of the membrane. A helical transmembrane segment spans residues 319–339 (LLLPTSALITGVAILESVGIA). At 340–355 (KALAAKNRYELDSNSE) the chain is on the cytoplasmic side. A helical membrane pass occupies residues 356 to 376 (LFGLGVANIFGSLFSAYPTTG). Topologically, residues 377–392 (SFSRSAVNSESEAKTG) are extracellular. The chain crosses the membrane as a helical span at residues 393 to 413 (LSGLVTGIIIGCSLLFLTPMF). The Cytoplasmic segment spans residues 414-420 (KFIPQCA). A helical transmembrane segment spans residues 421 to 441 (LAAIVISAVSGLVDYEGAIFL). Over 442–459 (WRVDKRDFTLWTITSTTT) the chain is Extracellular. Residues 460 to 480 (LFFGIEIGVLIGVGFSLAFVI) form a helical membrane-spanning segment. Residues 481–677 (HESANPHIAV…LEEPLLSREK (197 aa)) are Cytoplasmic-facing. The 125-residue stretch at 505-629 (QYPEAYTYNG…VRVHDAVQVC (125 aa)) folds into the STAS domain.

This sequence belongs to the SLC26A/SulP transporter (TC 2.A.53) family.

It is found in the membrane. H(+)/sulfate cotransporter that may play a role in the regulation of sulfate assimilation. The sequence is that of Probable sulfate transporter 4.2 (SULTR4;2) from Arabidopsis thaliana (Mouse-ear cress).